The chain runs to 341 residues: Anthranilate phosphoribosyltransferase (341 aa).

5-phospho-alpha-D-ribose 1-diphosphate is bound by residues G79, 82–83 (GD), T87, 89–92 (NIST), 107–115 (KHGNRAVSS), and S119. G79 is a binding site for anthranilate. Residue S91 participates in Mg(2+) binding. N110 serves as a coordination point for anthranilate. Anthranilate is bound at residue R165. 2 residues coordinate Mg(2+): D224 and E225.

This sequence belongs to the anthranilate phosphoribosyltransferase family. As to quaternary structure, homodimer. It depends on Mg(2+) as a cofactor.

The enzyme catalyses N-(5-phospho-beta-D-ribosyl)anthranilate + diphosphate = 5-phospho-alpha-D-ribose 1-diphosphate + anthranilate. The protein operates within amino-acid biosynthesis; L-tryptophan biosynthesis; L-tryptophan from chorismate: step 2/5. Its function is as follows. Catalyzes the transfer of the phosphoribosyl group of 5-phosphorylribose-1-pyrophosphate (PRPP) to anthranilate to yield N-(5'-phosphoribosyl)-anthranilate (PRA). This is Anthranilate phosphoribosyltransferase from Bacillus cereus (strain B4264).